The sequence spans 418 residues: Glutamyl-tRNA reductase (418 aa).

Residues 49-52 (TCNR), serine 109, 114-116 (EPQ), and glutamine 120 each bind substrate. The active-site Nucleophile is the cysteine 50. Residue 189 to 194 (GAGETI) coordinates NADP(+).

The protein belongs to the glutamyl-tRNA reductase family. As to quaternary structure, homodimer.

The catalysed reaction is (S)-4-amino-5-oxopentanoate + tRNA(Glu) + NADP(+) = L-glutamyl-tRNA(Glu) + NADPH + H(+). It participates in porphyrin-containing compound metabolism; protoporphyrin-IX biosynthesis; 5-aminolevulinate from L-glutamyl-tRNA(Glu): step 1/2. Functionally, catalyzes the NADPH-dependent reduction of glutamyl-tRNA(Glu) to glutamate 1-semialdehyde (GSA). The sequence is that of Glutamyl-tRNA reductase from Shigella dysenteriae serotype 1 (strain Sd197).